We begin with the raw amino-acid sequence, 104 residues long: MKSLLTFILTTIFCIQQVWAADLAHGEQIFSANCAACHAGGNNVIMPEKTLKLDALEANQMNSVEAISTQVRNGKNAMPSFSRLTDSDIEDVANYVLAQAKKGW.

Residues 1-20 form the signal peptide; that stretch reads MKSLLTFILTTIFCIQQVWA. Residues cysteine 34, cysteine 37, histidine 38, and methionine 78 each coordinate heme c.

This sequence belongs to the cytochrome c family. PetJ subfamily. As to quaternary structure, monomer. Binds 1 heme c group covalently per subunit.

The protein resides in the plastid. Its subcellular location is the chloroplast thylakoid lumen. Functionally, functions as an electron carrier between membrane-bound cytochrome b6-f and photosystem I in oxygenic photosynthesis. In Cyanidioschyzon merolae (strain NIES-3377 / 10D) (Unicellular red alga), this protein is Cytochrome c6.